Consider the following 72-residue polypeptide: Large ribosomal subunit protein bL31 (72 aa).

The Zn(2+) site is built by C16, C18, C38, and C41.

This sequence belongs to the bacterial ribosomal protein bL31 family. Type A subfamily. Part of the 50S ribosomal subunit. Zn(2+) serves as cofactor.

Its function is as follows. Binds the 23S rRNA. The protein is Large ribosomal subunit protein bL31 of Aromatoleum aromaticum (strain DSM 19018 / LMG 30748 / EbN1) (Azoarcus sp. (strain EbN1)).